A 307-amino-acid polypeptide reads, in one-letter code: UPF0276 protein HI_1600 (307 aa).

The protein belongs to the UPF0276 family.

This is UPF0276 protein HI_1600 from Haemophilus influenzae (strain ATCC 51907 / DSM 11121 / KW20 / Rd).